The following is a 101-amino-acid chain: Venom protein 214 (101 aa).

An N-terminal signal peptide occupies residues 1 to 16 (MIRYVLVIITCFLVAA).

In terms of processing, contains 3 disulfide bonds. As to expression, expressed by the venom gland.

It localises to the secreted. This is Venom protein 214 from Lychas mucronatus (Chinese swimming scorpion).